We begin with the raw amino-acid sequence, 231 residues long: Claudin-10 (231 aa).

Residues 1-21 (MASTASEIIAFMVSISGWVLV) form a helical membrane-spanning segment. Residues 22-80 (SSTLPTDYWKVSTIDGTVITTATYWANLWKTCVTDSTGVSNCKDFPSMLALDGYIQACR) lie on the Extracellular side of the membrane. A helical membrane pass occupies residues 81-101 (GLMIAAVSLGFFGSIFALIGM). Topologically, residues 102–115 (KCTKVGGSDKAKAK) are cytoplasmic. The chain crosses the membrane as a helical span at residues 116–136 (IACLAGIVFILSGLCSMTGCS). Residues 137-160 (LYANKITTEFFDPLFVEQKYELGA) are Extracellular-facing. A helical membrane pass occupies residues 161 to 181 (ALFIGWAGASLCLIGGVIFCF). The Cytoplasmic segment spans residues 182 to 231 (SISDNNKAPRMGYTYNGATSVMSSRTKYHGREGDLKTPNPSKQFDKNAYV).

This sequence belongs to the claudin family. Can form homodimers both in trans (interaction between CLDN10 molecules in opposing membranes) and in cis (interaction between CLDN10 molecules within one membrane). Interacts with CLDN19.

Its subcellular location is the cell junction. It is found in the tight junction. The protein resides in the cell membrane. It catalyses the reaction Na(+)(in) = Na(+)(out). The enzyme catalyses Li(+)(in) = Li(+)(out). It carries out the reaction K(+)(in) = K(+)(out). The catalysed reaction is Rb(+)(in) = Rb(+)(out). It catalyses the reaction Cs(+)(in) = Cs(+)(out). The enzyme catalyses NH4(+)(in) = NH4(+)(out). It carries out the reaction methylamine(out) = methylamine(in). The catalysed reaction is Mg(2+)(in) = Mg(2+)(out). It catalyses the reaction Ca(2+)(in) = Ca(2+)(out). The enzyme catalyses Sr(2+)(in) = Sr(2+)(out). It carries out the reaction chloride(in) = chloride(out). The catalysed reaction is nitrate(in) = nitrate(out). Functionally, forms paracellular channels: polymerizes in tight junction strands with cation- and anion-selective channels through the strands, conveying epithelial permeability in a process known as paracellular tight junction permeability. In sweat glands and in the thick ascending limb (TAL) of Henle's loop in kidney, it controls paracellular sodium permeability which is essential for proper sweat production and renal function. In renal proximal tubules, it conveys selective chloride over hydrogencarbonate anion permeability which is required for renal chloride reabsorption and salt homeostasis. The polypeptide is Claudin-10 (CLDN10) (Bos taurus (Bovine)).